Reading from the N-terminus, the 427-residue chain is UDP-N-acetylglucosamine--N-acetylmuramyl-(pentapeptide) pyrophosphoryl-undecaprenol N-acetylglucosamine transferase (427 aa).

UDP-N-acetyl-alpha-D-glucosamine is bound by residues 29–31 (TGG), N141, R177, S205, I258, and Q303. The segment at 408–427 (SLHPIPDSRFPIRTSAGGAQ) is disordered.

The protein belongs to the glycosyltransferase 28 family. MurG subfamily.

Its subcellular location is the cell inner membrane. It catalyses the reaction di-trans,octa-cis-undecaprenyl diphospho-N-acetyl-alpha-D-muramoyl-L-alanyl-D-glutamyl-meso-2,6-diaminopimeloyl-D-alanyl-D-alanine + UDP-N-acetyl-alpha-D-glucosamine = di-trans,octa-cis-undecaprenyl diphospho-[N-acetyl-alpha-D-glucosaminyl-(1-&gt;4)]-N-acetyl-alpha-D-muramoyl-L-alanyl-D-glutamyl-meso-2,6-diaminopimeloyl-D-alanyl-D-alanine + UDP + H(+). The protein operates within cell wall biogenesis; peptidoglycan biosynthesis. Its function is as follows. Cell wall formation. Catalyzes the transfer of a GlcNAc subunit on undecaprenyl-pyrophosphoryl-MurNAc-pentapeptide (lipid intermediate I) to form undecaprenyl-pyrophosphoryl-MurNAc-(pentapeptide)GlcNAc (lipid intermediate II). The chain is UDP-N-acetylglucosamine--N-acetylmuramyl-(pentapeptide) pyrophosphoryl-undecaprenol N-acetylglucosamine transferase from Xanthomonas campestris pv. campestris (strain B100).